Reading from the N-terminus, the 626-residue chain is Ankyrin repeat domain-containing protein 55 (626 aa).

ANK repeat units follow at residues 25 to 54 (VDLA…SILE), 59 to 88 (EGCT…NINT), 92 to 124 (YGRT…IPDK), 125 to 156 (NGRL…EINH), 160 to 189 (EGMT…DPTL), 193 to 222 (DFKT…GPSI), 229 to 259 (SGKT…NLQA), 263 to 292 (DDRT…DSNL), and 296 to 325 (NEST…AEPA). Basic and acidic residues predominate over residues 354 to 372 (KEEQKAHQKDQSRARPKEE). Disordered stretches follow at residues 354–377 (KEEQ…TSEV), 455–491 (HAGL…SLEN), and 522–626 (QPGH…HDEN). The residue at position 474 (Ser474) is a Phosphoserine. Over residues 604 to 614 (QRGHDPPRAEE) the composition is skewed to basic and acidic residues. The segment covering 616–626 (GGSSSPTHDEN) has biased composition (polar residues).

This is Ankyrin repeat domain-containing protein 55 (Ankrd55) from Mus musculus (Mouse).